Reading from the N-terminus, the 198-residue chain is Large ribosomal subunit protein uL24c (198 aa).

The N-terminal 50 residues, 1-50, are a transit peptide targeting the chloroplast; sequence MATMSALQSSFTSLSLSPSSSFLGQRLISPISLSVTSPVKPAENPCLVLA.

The protein belongs to the universal ribosomal protein uL24 family. As to quaternary structure, part of the 50S ribosomal subunit.

It localises to the plastid. It is found in the chloroplast. One of two assembly initiator proteins, it binds directly to the 5'-end of the 23S rRNA, where it nucleates assembly of the 50S subunit. Required for optimal plastid performance in terms of photosynthesis and growth. Required for the translation of plastid mRNAs. Plays a critical role in biosynthesis of thylakoid membrane proteins encoded by chloroplast genes. The polypeptide is Large ribosomal subunit protein uL24c (RPL24) (Arabidopsis thaliana (Mouse-ear cress)).